The primary structure comprises 111 residues: Nucleoid-associated protein SynRCC307_0025 (111 aa).

Belongs to the YbaB/EbfC family. In terms of assembly, homodimer.

The protein resides in the cytoplasm. It localises to the nucleoid. In terms of biological role, binds to DNA and alters its conformation. May be involved in regulation of gene expression, nucleoid organization and DNA protection. This is Nucleoid-associated protein SynRCC307_0025 from Synechococcus sp. (strain RCC307).